The following is a 284-amino-acid chain: Ermin (284 aa).

A disordered region spans residues 1 to 23 (MTDVPATFTQAECNGDKPPENGQ). The residue at position 73 (serine 73) is a Phosphoserine. A disordered region spans residues 110-251 (REGHQWEKIP…PTLGKKSDIS (142 aa)). 2 stretches are compositionally biased toward basic and acidic residues: residues 126–140 (EIRRQKERITEQPLK) and 171–183 (LHSKHDEEQKVWD). A compositionally biased stretch (acidic residues) spans 184–200 (EEIDDDDDDNCNNDEDE). Over residues 201–220 (VRVIEFKKKHEEVSQFKEEG) the composition is skewed to basic and acidic residues. 4 positions are modified to phosphoserine: serine 214, serine 226, serine 230, and serine 233. Positions 225–235 (DSPLSSASSQA) are enriched in low complexity. The residue at position 237 (threonine 237) is a Phosphothreonine. A binds actin region spans residues 265–284 (KIRKGNTKQRIDEFESMMHL).

As to quaternary structure, binds actin. In terms of tissue distribution, highly expressed in adult and fetal brain. Expressed at intermediate levels in the lung and liver.

Its subcellular location is the cytoplasm. The protein localises to the cytoskeleton. Plays a role in cytoskeletal rearrangements during the late wrapping and/or compaction phases of myelinogenesis as well as in maintenance and stability of myelin sheath in the adult. May play an important role in late-stage oligodendroglia maturation, myelin/Ranvier node formation during CNS development, and in the maintenance and plasticity of related structures in the mature CNS. This is Ermin (ERMN) from Homo sapiens (Human).